The sequence spans 414 residues: Proton/glutamate-aspartate symporter (414 aa).

Residues 1–3 (MKK) are Cytoplasmic-facing. The helical transmembrane segment at 4-24 (LIAFQILIALAVGAVIGHFFP) threads the bilayer. At 25–42 (DFGMALRPVGDGFIRLIK) the chain is on the extracellular side. A helical membrane pass occupies residues 43 to 63 (MIVVPIVFSTIVIGAAGSGSM). Topologically, residues 64-73 (KKMGSLGIKT) are cytoplasmic. A helical transmembrane segment spans residues 74 to 94 (IIWFEVITTLVLGLGLLLANV). Over 95–144 (LKPGVGLDLSHLAKKDIHELSGYTDKVVDFKQMILDIIPTNIIDVMARND) the chain is Extracellular. The chain crosses the membrane as a helical span at residues 145–165 (LLAVIFFAILFGVAAAGIGKA). The Cytoplasmic segment spans residues 166 to 182 (SEPVMKFFESTAQIMFK). Residues 183 to 203 (LTQIVMVTAPIGVLALMAASV) traverse the membrane as a helical segment. The Extracellular portion of the chain corresponds to 204–219 (GQYGIELLLPMFKLVG). The helical transmembrane segment at 220-240 (TVFLGLFLILFVLFPLVGLIF) threads the bilayer. A topological domain (cytoplasmic) is located at residue glutamine 241. A helical membrane pass occupies residues 242-262 (IKYFEVLKMIWDLFLIAFSTT). Residues 263-300 (STETILPQLMDRMEKYGCPKRVVSFVVPSGLSLNCDGS) are Extracellular-facing. Residues 301–321 (SLYLSVSCIFLAQAFQVDMTL) form a helical membrane-spanning segment. At 322–324 (SQQ) the chain is on the cytoplasmic side. The next 2 membrane-spanning stretches (helical) occupy residues 325 to 345 (LLMMLVLVMTSKGIAAVPSGS) and 346 to 366 (LVVLLATANAVGLPAEGVAII). Over 367–414 (AGVDRVMDMARTGVNVPGHAIACIVVSKWEKAFRQKEWVSANSQTESI) the chain is Cytoplasmic.

It belongs to the dicarboxylate/amino acid:cation symporter (DAACS) (TC 2.A.23) family.

It is found in the cell membrane. With respect to regulation, glutamate uptake is inhibited by beta-hydroxyaspartate and cysteic acid. Functionally, catalyzes the proton-dependent, binding-protein-independent transport of glutamate and aspartate. The polypeptide is Proton/glutamate-aspartate symporter (Bacillus subtilis (strain 168)).